The sequence spans 472 residues: MKKFMDDNFLLSNDTAEELFHHYAKDMPIIDYHCHLSPKEIYMNKRYSNITEVWLYGDHYKWRAMRAAGVEESLITGDANDYDKFMAWAETVPKLIGNPLYNWTHLELQRYFGVDEILNKESGPSIWEKVNKCLAQDDFGVRELINQSNVQVVCTTDDPIDDLSFHQMLVEDDDFSVKVLPGFRPDKAIEINQEGFIDYVDSLEKVTSHSTKTYDGFLRALKSRVDYFHQNGCSVADHALNTMMFTETTKEKARNYYEKAMNGQKLSPKEESDFKSFTLVFLGEQYADKGWVMQYHINALRNNNSRMYNNLGPDTGYDAMNDEVISKPLVNLLNELEKKDRLPKTILYSLNPNDNPVIASIIGSFQRGGVPGKLQFGTAWWFNDTKSGMIKQMQTLADIGVFSQFIGMLTDSRSFLSYPRHEYFRRLVCSLIGEWVHNGEVPYDLKSLGEIVQDISYYNAARYFDFGLLSDE.

It belongs to the metallo-dependent hydrolases superfamily. Uronate isomerase family.

It catalyses the reaction D-glucuronate = D-fructuronate. It carries out the reaction aldehydo-D-galacturonate = keto-D-tagaturonate. The protein operates within carbohydrate metabolism; pentose and glucuronate interconversion. The polypeptide is Uronate isomerase (Oceanobacillus iheyensis (strain DSM 14371 / CIP 107618 / JCM 11309 / KCTC 3954 / HTE831)).